The following is a 411-amino-acid chain: Translation initiation factor 2 subunit gamma (411 aa).

Residues glutamine 9 to lysine 201 enclose the tr-type G domain. The segment at glycine 18–serine 25 is G1. The Mg(2+) site is built by aspartate 21, serine 25, glycine 46, and serine 48. Aspartate 21–threonine 26 is a GTP binding site. The tract at residues glycine 46 to lysine 50 is G2. Residues aspartate 88–glycine 91 form a G3 region. Residues asparagine 144 to aspartate 147 and serine 179 to tyrosine 181 contribute to the GTP site. Positions asparagine 144 to aspartate 147 are G4. The tract at residues serine 179–tyrosine 181 is G5.

This sequence belongs to the TRAFAC class translation factor GTPase superfamily. Classic translation factor GTPase family. EIF2G subfamily. In terms of assembly, heterotrimer composed of an alpha, a beta and a gamma chain. It depends on Mg(2+) as a cofactor.

It catalyses the reaction GTP + H2O = GDP + phosphate + H(+). In terms of biological role, eIF-2 functions in the early steps of protein synthesis by forming a ternary complex with GTP and initiator tRNA. The chain is Translation initiation factor 2 subunit gamma from Thermoplasma acidophilum (strain ATCC 25905 / DSM 1728 / JCM 9062 / NBRC 15155 / AMRC-C165).